The sequence spans 126 residues: MPERLQVYKCEVCGNIVEVLNGGIGELVCCNQDMKLMSENTVDAAKEKHVPVIEKIDGGYKVKVGAVAHPMEEKHYIQWIELLADDKCYTQFLKPGQAPEAVFLIEAAKVVAREYCNIHGHWKAEN.

Residues cysteine 10, cysteine 13, cysteine 29, cysteine 30, histidine 49, histidine 69, histidine 75, cysteine 116, and histidine 119 each contribute to the Fe cation site.

It belongs to the desulfoferrodoxin family. As to quaternary structure, homodimer. Fe(3+) is required as a cofactor. It depends on Cu(2+) as a cofactor.

It catalyses the reaction reduced [rubredoxin] + superoxide + 2 H(+) = oxidized [rubredoxin] + H2O2. Its function is as follows. Catalyzes the one-electron reduction of superoxide anion radical to hydrogen peroxide at a nonheme ferrous iron center. Plays a fundamental role in case of oxidative stress via its superoxide detoxification activity. The protein is Desulfoferrodoxin (dfx) of Desulfarculus baarsii (strain ATCC 33931 / DSM 2075 / LMG 7858 / VKM B-1802 / 2st14).